Consider the following 199-residue polypeptide: 7-methyl-GTP pyrophosphatase (199 aa).

Asp73 (proton acceptor) is an active-site residue.

The protein belongs to the Maf family. YceF subfamily. Requires a divalent metal cation as cofactor.

The protein localises to the cytoplasm. It carries out the reaction N(7)-methyl-GTP + H2O = N(7)-methyl-GMP + diphosphate + H(+). Nucleoside triphosphate pyrophosphatase that hydrolyzes 7-methyl-GTP (m(7)GTP). May have a dual role in cell division arrest and in preventing the incorporation of modified nucleotides into cellular nucleic acids. This chain is 7-methyl-GTP pyrophosphatase, found in Bordetella bronchiseptica (strain ATCC BAA-588 / NCTC 13252 / RB50) (Alcaligenes bronchisepticus).